Consider the following 627-residue polypeptide: Bromodomain adjacent to zinc finger domain protein 1A (627 aa).

The PHD-type zinc-finger motif lies at 222 to 272 (NARCKVCRKKGDGESMVLCDGCDRGHHIYCVRPKLKYVPEGDWFCPECHPK). Positions 270–503 (HPKQRSHRLP…NRRSSGRHHG (234 aa)) are disordered. The segment covering 272–283 (KQRSHRLPSRHR) has biased composition (basic residues). Positions 281 to 327 (RHRYSMDSDEEEEEELDQKEEEEEEEEQEELSESENEQEDEMSEEES) form a coiled coil. Over residues 287–326 (DSDEEEEEELDQKEEEEEEEEQEELSESENEQEDEMSEEE) the composition is skewed to acidic residues. Low complexity predominate over residues 348-359 (TGKLGPKPKTGK). Polar residues-rich tracts occupy residues 386–395 (EPTSRLSASD) and 402–412 (SPNSSLVNVVT). Basic residues predominate over residues 417–431 (GRGKGKGRGRGRGRL). Over residues 486 to 496 (DISSLEQGNRR) the composition is skewed to polar residues. The Bromo domain maps to 502–605 (HGVHELSACE…SFFITEAQNL (104 aa)).

This sequence belongs to the WAL family. Together with p18 and p20 proteins, it forms the Xenopus version of CHRAC. In terms of processing, phosphorylated in mitosis.

It is found in the nucleus. Regulatory subunit of a chromatin remodeling complex, which forms ordered nucleosome arrays on chromatin and slides edge- and center-positioned histone octamers away from their original location on the DNA template to facilitate access to DNA during DNA-templated processes such as DNA replication, transcription, and repair. Involved in regulating the spacing of nucleosomes along the chromatin and have the ability to slide mononucleosomes to the center of a DNA template in an ATP-dependent manner. May play a role in transcriptional regulation. The sequence is that of Bromodomain adjacent to zinc finger domain protein 1A (baz1a) from Xenopus laevis (African clawed frog).